Here is a 69-residue protein sequence, read N- to C-terminus: Conotoxin AbVIF (69 aa).

The signal sequence occupies residues 1–17 (VLIIAVLFLTACQLTTA). The propeptide occupies 18 to 40 (ETSSRGKQKHRALRSTDKNSRMS). Positions 20-41 (SSRGKQKHRALRSTDKNSRMSK) are disordered. 3 disulfides stabilise this stretch: Cys43-Cys57, Cys50-Cys61, and Cys56-Cys68.

Belongs to the conotoxin O1 superfamily. Expressed by the venom duct.

It is found in the secreted. The chain is Conotoxin AbVIF from Conus abbreviatus (Abbreviated cone).